The sequence spans 120 residues: Large ribosomal subunit protein uL18 (120 aa).

It belongs to the universal ribosomal protein uL18 family. Part of the 50S ribosomal subunit; part of the 5S rRNA/L5/L18/L25 subcomplex. Contacts the 5S and 23S rRNAs.

This is one of the proteins that bind and probably mediate the attachment of the 5S RNA into the large ribosomal subunit, where it forms part of the central protuberance. This is Large ribosomal subunit protein uL18 from Paramagnetospirillum magneticum (strain ATCC 700264 / AMB-1) (Magnetospirillum magneticum).